The chain runs to 192 residues: Adenylate kinase (192 aa).

12 to 17 is an ATP binding site; that stretch reads GSGKTT. The NMP stretch occupies residues 34–63; sequence STGDLLRAEVASGSELGQTIKSYIDNGNLV. AMP is bound by residues Thr-35, Arg-40, 61–63, 88–91, and Gln-95; these read NLV and GFPR. An LID region spans residues 130–136; that stretch reads GRARGAD. Arg-131 contacts ATP. AMP is bound by residues Arg-133 and Arg-145. Residue Arg-173 participates in ATP binding.

This sequence belongs to the adenylate kinase family. In terms of assembly, monomer.

It localises to the cytoplasm. It catalyses the reaction AMP + ATP = 2 ADP. Its pathway is purine metabolism; AMP biosynthesis via salvage pathway; AMP from ADP: step 1/1. Its function is as follows. Catalyzes the reversible transfer of the terminal phosphate group between ATP and AMP. Plays an important role in cellular energy homeostasis and in adenine nucleotide metabolism. In Nautilia profundicola (strain ATCC BAA-1463 / DSM 18972 / AmH), this protein is Adenylate kinase.